The chain runs to 121 residues: UPF0738 protein RBAM_011600 (121 aa).

This sequence belongs to the UPF0738 family.

The chain is UPF0738 protein RBAM_011600 from Bacillus velezensis (strain DSM 23117 / BGSC 10A6 / LMG 26770 / FZB42) (Bacillus amyloliquefaciens subsp. plantarum).